The primary structure comprises 321 residues: ATP-dependent 6-phosphofructokinase (321 aa).

An ATP-binding site is contributed by glycine 12. ADP-binding positions include 22 to 26 (RAVVR) and 55 to 60 (RYSVSD). ATP is bound by residues 73 to 74 (RF) and 103 to 106 (GDGS). Aspartate 104 contributes to the Mg(2+) binding site. A substrate-binding site is contributed by 127–129 (TID). Aspartate 129 serves as the catalytic Proton acceptor. Arginine 156 contacts ADP. Substrate-binding positions include arginine 164 and 171–173 (MGR). Residues 187-189 (GCE) and 215-217 (KRH) contribute to the ADP site. Residues glutamate 224, arginine 245, and 251–254 (HVQR) each bind substrate.

The protein belongs to the phosphofructokinase type A (PFKA) family. ATP-dependent PFK group I subfamily. Prokaryotic clade 'B1' sub-subfamily. As to quaternary structure, homotetramer. Mg(2+) is required as a cofactor.

It localises to the cytoplasm. It carries out the reaction beta-D-fructose 6-phosphate + ATP = beta-D-fructose 1,6-bisphosphate + ADP + H(+). Its pathway is carbohydrate degradation; glycolysis; D-glyceraldehyde 3-phosphate and glycerone phosphate from D-glucose: step 3/4. Allosterically activated by ADP and other diphosphonucleosides, and allosterically inhibited by phosphoenolpyruvate. Functionally, catalyzes the phosphorylation of D-fructose 6-phosphate to fructose 1,6-bisphosphate by ATP, the first committing step of glycolysis. This Actinobacillus succinogenes (strain ATCC 55618 / DSM 22257 / CCUG 43843 / 130Z) protein is ATP-dependent 6-phosphofructokinase.